Here is an 80-residue protein sequence, read N- to C-terminus: Ubiquinol-cytochrome c reductase complex assembly factor 5 (80 aa).

Over 1–19 (MFSRAQVRRALQRVPGKQR) the chain is Mitochondrial matrix. A helical membrane pass occupies residues 20–41 (FGIYRFLPFFFVLGGAMEWIMI). Residues 42-80 (KVRVGQETFYDVYRRKASERQYQRRLEDTSETNLHKLIK) are Mitochondrial intermembrane-facing.

It belongs to the UQCC5 family. As to quaternary structure, associates with the mitochondrial ribosome. Interacts with UQCC6. Interacts with MT-CYB; interacts with newly synthesizes MT-CYB. Forms a complex, named COMB/coordinator of mitochondrial CYTB biogenesis, composed of UQCC1, UQCC2, UQCC4, UQCC5 and UQCC6; stabilizes nascent cytochrome b/MT-CYB and promotes its membrane insertion.

It localises to the mitochondrion inner membrane. Required for the assembly and stability of the mitochondrial ubiquinol-cytochrome c reductase complex (complex III (CIII) or cytochrome b-c1 complex), a multisubunit transmembrane complex that is part of the mitochondrial electron transport chain (ETC) which drives oxidative phosphorylation. Mediates early complex III biogenesis. Participates in regulating the levels of electron transport chain proteins, and therefore energy supply, in response to changes in energy demand. Also required for cytochrome c oxidase complex (complex IV) assembly. This chain is Ubiquinol-cytochrome c reductase complex assembly factor 5, found in Mus musculus (Mouse).